Reading from the N-terminus, the 550-residue chain is Arginine--tRNA ligase (550 aa).

The short motif at 130–140 (ANPTGPIHLGG) is the 'HIGH' region element.

The protein belongs to the class-I aminoacyl-tRNA synthetase family. In terms of assembly, monomer.

It localises to the cytoplasm. It catalyses the reaction tRNA(Arg) + L-arginine + ATP = L-arginyl-tRNA(Arg) + AMP + diphosphate. This chain is Arginine--tRNA ligase, found in Rhodococcus opacus (strain B4).